Here is a 410-residue protein sequence, read N- to C-terminus: E3 ubiquitin-protein ligase PRT1 (410 aa).

2 consecutive RING-type zinc fingers follow at residues C26–R66 and C192–N232. The segment at H306–V370 adopts a ZZ-type zinc-finger fold. Residues C311, C314, C326, C329, C338, C341, H356, and H360 each coordinate Zn(2+). The disordered stretch occupies residues I385–E410. Low complexity predominate over residues P399–E410.

Its subcellular location is the cytoplasm. The catalysed reaction is S-ubiquitinyl-[E2 ubiquitin-conjugating enzyme]-L-cysteine + [acceptor protein]-L-lysine = [E2 ubiquitin-conjugating enzyme]-L-cysteine + N(6)-ubiquitinyl-[acceptor protein]-L-lysine.. The protein operates within protein modification; protein ubiquitination. E3 ubiquitin-protein ligase that mediates ubiquitination and subsequent proteasomal degradation of target proteins. Functions in the N-end rule pathway of protein degradation, where it specifically recognizes and ubiquitinates proteins with a N-terminal bulky aromatic amino acid (Phe). Does not act on aliphatic hydrophobic and basic N-terminal residues (Arg or Leu) containing proteins. The polypeptide is E3 ubiquitin-protein ligase PRT1 (PRT1) (Arabidopsis thaliana (Mouse-ear cress)).